We begin with the raw amino-acid sequence, 39 residues long: Adipokinetic prohormone type 2 (39 aa).

Glutamine 1 is modified (pyrrolidone carboxylic acid). The residue at position 8 (tryptophan 8) is a Tryptophan amide.

Belongs to the AKH/HRTH/RPCH family. In terms of assembly, adipokinetic hormone precursor-related peptide (APRP) can form three type of disulfide-bond dimers: p1 (alpha-alpha), p2 (alpha-beta), and p3 (beta-beta).

The protein localises to the secreted. This hormone, released from cells in the corpora cardiaca, causes release of diglycerides from the fat body and stimulation of muscles to use these diglycerides as an energy source during energy-demanding processes. The chain is Adipokinetic prohormone type 2 from Schistocerca gregaria (Desert locust).